The primary structure comprises 149 residues: MTSFKLVKYTPRIKKKKSGLRKLARKVPTDRLLKFERVFKAQKRIHMSVFKVQRVLDEIRWRYYEETVMILNLMPYRASYPILKLVYSAAANATHYRDFDKANLFITKAEVSRSTIMNKFRPRARGRSSPIKKTMCHITIVLNIVKKSK.

The protein belongs to the universal ribosomal protein uL22 family. Part of the 50S ribosomal subunit.

Its subcellular location is the plastid. It localises to the chloroplast. Its function is as follows. This protein binds specifically to 23S rRNA. The globular domain of the protein is located near the polypeptide exit tunnel on the outside of the subunit, while an extended beta-hairpin is found that lines the wall of the exit tunnel in the center of the 70S ribosome. This Oryza nivara (Indian wild rice) protein is Large ribosomal subunit protein uL22c (rpl22).